A 788-amino-acid polypeptide reads, in one-letter code: Integrin beta-6 (788 aa).

The first 21 residues, 1–21 (MGIELLCLFFLCLGRNDHVQG), serve as a signal peptide directing secretion. Positions 22–71 (GCAVGGAETCEDCLLIGPQCAWCSQENFTHLSGVGERCDTPANLLAKGCQ) constitute a PSI domain. At 22-709 (GCAVGGAETC…KDCPKPPNIP (688 aa)) the chain is on the extracellular side. 19 disulfide bridges follow: Cys23/Cys41, Cys31/Cys454, Cys34/Cys59, Cys44/Cys70, Cys197/Cys204, Cys252/Cys293, Cys394/Cys406, Cys426/Cys452, Cys456/Cys476, Cys467/Cys479, Cys481/Cys490, Cys492/Cys519, Cys502/Cys517, Cys511/Cys522, Cys524/Cys537, Cys539/Cys560, Cys544/Cys558, Cys552/Cys563, and Cys565/Cys574. N-linked (GlcNAc...) asparagine glycans are attached at residues Asn48 and Asn97. The VWFA domain occupies 131–371 (YPVDLYYLMD…QLIISAYEEL (241 aa)). 3 residues coordinate Mg(2+): Asp140, Ser142, and Ser144. Ca(2+) contacts are provided by Ser144, Asp147, Asp148, and Glu179. Positions 235, 237, 239, and 240 each coordinate Ca(2+). Mg(2+) is bound at residue Glu240. A glycan (N-linked (GlcNAc...) asparagine) is linked at Asn260. Residues Asp271 and Lys355 each coordinate Ca(2+). Asn387 carries N-linked (GlcNAc...) asparagine glycosylation. N-linked (GlcNAc...) asparagine glycosylation occurs at Asn418. 4 consecutive I-EGF domains span residues 456 to 491 (CQKE…HHCE), 492 to 538 (CGED…PYCQ), 539 to 575 (CDNF…EYCN), and 576 to 615 (CTTS…PTCE). Residues Asn463 and Asn471 are each glycosylated (N-linked (GlcNAc...) asparagine). Asn541 carries an N-linked (GlcNAc...) asparagine glycan. A glycan (N-linked (GlcNAc...) asparagine) is linked at Asn575. Intrachain disulfides connect Cys576/Cys599, Cys583/Cys597, Cys591/Cys602, Cys604/Cys614, Cys617/Cys620, Cys624/Cys670, Cys630/Cys649, Cys633/Cys645, and Cys678/Cys702. Residues 710 to 730 (MIMLGVSLAILLIGVVLLCIW) traverse the membrane as a helical segment. Positions 731–758 (KLLVSFHDRKEVAKFEAERSKAKWQTGT) are interaction with HAX1. At 731 to 788 (KLLVSFHDRKEVAKFEAERSKAKWQTGTNPLYRGSTSTFKNVTYKHKEKQKVDLSTDG) the chain is on the cytoplasmic side.

Belongs to the integrin beta chain family. Heterodimer of an alpha and a beta subunit. Interacts with FLNB. Interacts with HAX1. ITGAV:ITGB6 interacts with FBN1. ITGAV:ITGB6 interacts with TGFB1.

Its subcellular location is the cell membrane. It localises to the cell junction. It is found in the focal adhesion. Its function is as follows. Integrin alpha-V:beta-6 (ITGAV:ITGB6) is a receptor for fibronectin and cytotactin. It recognizes the sequence R-G-D in its ligands. ITGAV:ITGB6 acts as a receptor for fibrillin-1 (FBN1) and mediates R-G-D-dependent cell adhesion to FBN1. Integrin alpha-V:beta-6 (ITGAV:ITGB6) mediates R-G-D-dependent release of transforming growth factor beta-1 (TGF-beta-1) from regulatory Latency-associated peptide (LAP), thereby playing a key role in TGF-beta-1 activation. This is Integrin beta-6 (ITGB6) from Bos taurus (Bovine).